The sequence spans 86 residues: Translation initiation factor IF-1 2 (86 aa).

The region spanning 1 to 72 is the S1-like domain; the sequence is MAKEELLEME…SKGRITFRHI (72 aa).

This sequence belongs to the IF-1 family. Component of the 30S ribosomal translation pre-initiation complex which assembles on the 30S ribosome in the order IF-2 and IF-3, IF-1 and N-formylmethionyl-tRNA(fMet); mRNA recruitment can occur at any time during PIC assembly.

Its subcellular location is the cytoplasm. Functionally, one of the essential components for the initiation of protein synthesis. Stabilizes the binding of IF-2 and IF-3 on the 30S subunit to which N-formylmethionyl-tRNA(fMet) subsequently binds. Helps modulate mRNA selection, yielding the 30S pre-initiation complex (PIC). Upon addition of the 50S ribosomal subunit IF-1, IF-2 and IF-3 are released leaving the mature 70S translation initiation complex. The sequence is that of Translation initiation factor IF-1 2 from Polynucleobacter asymbioticus (strain DSM 18221 / CIP 109841 / QLW-P1DMWA-1) (Polynucleobacter necessarius subsp. asymbioticus).